The following is a 1017-amino-acid chain: Probable calcium-transporting ATPase 8, plasma membrane-type (1017 aa).

Over 1–153 (MEKLDRYLQE…FVWDAFQDMT (153 aa)) the chain is Cytoplasmic. 2 helical membrane passes run 154–174 (LIILMVCALLSVAVGLATEGW) and 177–197 (GMYDGLGIILSIFLVVMVTAV). Residues 198 to 228 (SDYKQSLQFKELDNEKKKIFIHVTRDGRRQK) are Cytoplasmic-facing. 2 consecutive transmembrane segments (helical) span residues 229–249 (ISIYDLVVGDIVHLSIGDQVP) and 331–351 (VATVIGKIGLVFAILTFLVLL). The Cytoplasmic portion of the chain corresponds to 352-384 (VRFLIDKGMTVGLLKWYSTDALTIVNYFATAVT). The helical transmembrane segment at 385–405 (IIVVAVPEGLPLAVTLSLAFA) threads the bilayer. Asp-434 functions as the 4-aspartylphosphate intermediate in the catalytic mechanism. 2 residues coordinate Mg(2+): Asp-736 and Asp-740. Residues 803–823 (IVALVINFVSACITGSAPLTA) form a helical membrane-spanning segment. Residues 824 to 825 (VQ) are Cytoplasmic-facing. The next 2 helical transmembrane spans lie at 826-846 (LLWVNMIMDTLGALALATEPP) and 875-895 (SLYQLFVLGALMFGGESLLNI). At 896-938 (KGADSKSIINTLIFNSFVFCQVFNEINSREMQKINVFRGIISN) the chain is on the cytoplasmic side. 2 consecutive transmembrane segments (helical) span residues 939–959 (WIFIAVIAATVAFQVVIIEFL) and 973–993 (WLLSVGLGSISLIVGVILKCI). The Cytoplasmic portion of the chain corresponds to 994–1017 (PVGSGETSATPNGYRPLANGPDDI).

The protein belongs to the cation transport ATPase (P-type) (TC 3.A.3) family. Type IIB subfamily.

It localises to the membrane. It catalyses the reaction Ca(2+)(in) + ATP + H2O = Ca(2+)(out) + ADP + phosphate + H(+). Activated by calmodulin. This magnesium-dependent enzyme catalyzes the hydrolysis of ATP coupled with the translocation of calcium from the cytosol out of the cell, into the endoplasmic reticulum, or into organelles. In Oryza sativa subsp. japonica (Rice), this protein is Probable calcium-transporting ATPase 8, plasma membrane-type.